The sequence spans 444 residues: Radical S-adenosyl methionine domain-containing protein 1, mitochondrial (444 aa).

The transit peptide at 1–39 (MSTRVLTLTLLKKRHLMQCFWSTVGSVHLRSIASDKIPS) directs the protein to the mitochondrion. The 235-residue stretch at 40 to 274 (HAVEASLYVH…CRVLEESGFH (235 aa)) folds into the Radical SAM core domain. Position 47 (Tyr-47) interacts with S-adenosyl-L-methionine. [4Fe-4S] cluster-binding residues include Cys-53, Cys-57, and Cys-60. S-adenosyl-L-methionine contacts are provided by residues Gly-102, 103-104 (GT), Glu-135, Gln-162, Arg-174, and Asp-199.

It belongs to the anaerobic coproporphyrinogen-III oxidase family. HemW subfamily. [4Fe-4S] cluster is required as a cofactor.

It is found in the mitochondrion. Its function is as follows. May be a heme chaperone, appears to bind heme. Homologous bacterial proteins do not have oxygen-independent coproporphyrinogen-III oxidase activity. Binds 1 [4Fe-4S] cluster. The cluster is coordinated with 3 cysteines and an exchangeable S-adenosyl-L-methionine. This chain is Radical S-adenosyl methionine domain-containing protein 1, mitochondrial (rsad1), found in Danio rerio (Zebrafish).